The sequence spans 469 residues: tRNA-2-methylthio-N(6)-dimethylallyladenosine synthase (469 aa).

One can recognise an MTTase N-terminal domain in the interval arginine 22–glutamate 142. 6 residues coordinate [4Fe-4S] cluster: cysteine 31, cysteine 67, cysteine 105, cysteine 183, cysteine 187, and cysteine 190. A Radical SAM core domain is found at arginine 169–glutamate 401. The region spanning glutamate 404–glutamate 466 is the TRAM domain.

It belongs to the methylthiotransferase family. MiaB subfamily. As to quaternary structure, monomer. It depends on [4Fe-4S] cluster as a cofactor.

The protein localises to the cytoplasm. The catalysed reaction is N(6)-dimethylallyladenosine(37) in tRNA + (sulfur carrier)-SH + AH2 + 2 S-adenosyl-L-methionine = 2-methylsulfanyl-N(6)-dimethylallyladenosine(37) in tRNA + (sulfur carrier)-H + 5'-deoxyadenosine + L-methionine + A + S-adenosyl-L-homocysteine + 2 H(+). Catalyzes the methylthiolation of N6-(dimethylallyl)adenosine (i(6)A), leading to the formation of 2-methylthio-N6-(dimethylallyl)adenosine (ms(2)i(6)A) at position 37 in tRNAs that read codons beginning with uridine. The sequence is that of tRNA-2-methylthio-N(6)-dimethylallyladenosine synthase from Rhizobium etli (strain ATCC 51251 / DSM 11541 / JCM 21823 / NBRC 15573 / CFN 42).